The sequence spans 380 residues: Queuine tRNA-ribosyltransferase (380 aa).

Aspartate 95 (proton acceptor) is an active-site residue. Substrate is bound by residues 95–99 (DSGGF), aspartate 149, glutamine 192, and glycine 219. An RNA binding region spans residues 250-256 (GVGSPDS). Aspartate 269 acts as the Nucleophile in catalysis. The interval 274–278 (TRIGR) is RNA binding; important for wobble base 34 recognition. 4 residues coordinate Zn(2+): cysteine 307, cysteine 309, cysteine 312, and histidine 338.

The protein belongs to the queuine tRNA-ribosyltransferase family. Homodimer. Within each dimer, one monomer is responsible for RNA recognition and catalysis, while the other monomer binds to the replacement base PreQ1. Zn(2+) is required as a cofactor.

It catalyses the reaction 7-aminomethyl-7-carbaguanine + guanosine(34) in tRNA = 7-aminomethyl-7-carbaguanosine(34) in tRNA + guanine. It participates in tRNA modification; tRNA-queuosine biosynthesis. Functionally, catalyzes the base-exchange of a guanine (G) residue with the queuine precursor 7-aminomethyl-7-deazaguanine (PreQ1) at position 34 (anticodon wobble position) in tRNAs with GU(N) anticodons (tRNA-Asp, -Asn, -His and -Tyr). Catalysis occurs through a double-displacement mechanism. The nucleophile active site attacks the C1' of nucleotide 34 to detach the guanine base from the RNA, forming a covalent enzyme-RNA intermediate. The proton acceptor active site deprotonates the incoming PreQ1, allowing a nucleophilic attack on the C1' of the ribose to form the product. After dissociation, two additional enzymatic reactions on the tRNA convert PreQ1 to queuine (Q), resulting in the hypermodified nucleoside queuosine (7-(((4,5-cis-dihydroxy-2-cyclopenten-1-yl)amino)methyl)-7-deazaguanosine). This Geobacillus kaustophilus (strain HTA426) protein is Queuine tRNA-ribosyltransferase.